The primary structure comprises 220 residues: Telomere repeats-binding bouquet formation protein 2 (220 aa).

Belongs to the TERB2 family. In terms of assembly, component of the MAJIN-TERB1-TERB2 complex, composed of MAJIN, TERB1 and TERB2.

The protein resides in the chromosome. Its subcellular location is the telomere. The protein localises to the nucleus inner membrane. Its function is as follows. Meiosis-specific telomere-associated protein involved in meiotic telomere attachment to the nucleus inner membrane, a crucial step for homologous pairing and synapsis. Component of the MAJIN-TERB1-TERB2 complex, which promotes telomere cap exchange by mediating attachment of telomeric DNA to the inner nuclear membrane and replacement of the protective cap of telomeric chromosomes: in early meiosis, the MAJIN-TERB1-TERB2 complex associates with telomeric DNA and the shelterin/telosome complex. During prophase, the complex matures and promotes release of the shelterin/telosome complex from telomeric DNA. This is Telomere repeats-binding bouquet formation protein 2 (TERB2) from Homo sapiens (Human).